Consider the following 278-residue polypeptide: 4-deoxy-L-threo-5-hexosulose-uronate ketol-isomerase (278 aa).

4 residues coordinate Zn(2+): H196, H198, E203, and H245.

The protein belongs to the KduI family. Zn(2+) is required as a cofactor.

It carries out the reaction 5-dehydro-4-deoxy-D-glucuronate = 3-deoxy-D-glycero-2,5-hexodiulosonate. It participates in glycan metabolism; pectin degradation; 2-dehydro-3-deoxy-D-gluconate from pectin: step 4/5. Catalyzes the isomerization of 5-dehydro-4-deoxy-D-glucuronate to 3-deoxy-D-glycero-2,5-hexodiulosonate. This Yersinia pseudotuberculosis serotype O:1b (strain IP 31758) protein is 4-deoxy-L-threo-5-hexosulose-uronate ketol-isomerase.